Here is a 577-residue protein sequence, read N- to C-terminus: Probable cytochrome c biosynthesis protein (577 aa).

It belongs to the CcmF/CycK/Ccl1/NrfE/CcsA family.

It is found in the mitochondrion. In terms of biological role, could be involved in assembly and maturation of cytochromes c. May play a role in guidance of apocytochromes and heme groups for the covalent linkage introduced by the cytochrome-c-heme lyase. This Oenothera berteroana (Bertero's evening primrose) protein is Probable cytochrome c biosynthesis protein.